A 463-amino-acid chain; its full sequence is Argininosuccinate lyase (463 aa).

Belongs to the lyase 1 family. Argininosuccinate lyase subfamily.

It is found in the cytoplasm. The enzyme catalyses 2-(N(omega)-L-arginino)succinate = fumarate + L-arginine. Its pathway is amino-acid biosynthesis; L-arginine biosynthesis; L-arginine from L-ornithine and carbamoyl phosphate: step 3/3. In Methylorubrum extorquens (strain CM4 / NCIMB 13688) (Methylobacterium extorquens), this protein is Argininosuccinate lyase.